The sequence spans 141 residues: Large ribosomal subunit protein uL11 (141 aa).

It belongs to the universal ribosomal protein uL11 family. As to quaternary structure, part of the ribosomal stalk of the 50S ribosomal subunit. Interacts with L10 and the large rRNA to form the base of the stalk. L10 forms an elongated spine to which L12 dimers bind in a sequential fashion forming a multimeric L10(L12)X complex. Post-translationally, one or more lysine residues are methylated.

In terms of biological role, forms part of the ribosomal stalk which helps the ribosome interact with GTP-bound translation factors. The polypeptide is Large ribosomal subunit protein uL11 (Pseudothermotoga lettingae (strain ATCC BAA-301 / DSM 14385 / NBRC 107922 / TMO) (Thermotoga lettingae)).